We begin with the raw amino-acid sequence, 58 residues long: AKDGDVKGPAGCMKYKSGDCRGKTCCDQQYLWYKWRNLACRCFTVEVFKKDCWCNDIS.

4 disulfide bridges follow: cysteine 12–cysteine 26, cysteine 20–cysteine 40, cysteine 25–cysteine 54, and cysteine 42–cysteine 52.

It belongs to the neurotoxin 26 (DTX) family. In terms of tissue distribution, expressed by the venom gland.

The protein resides in the secreted. Acts by delaying the inactivation of presynaptic voltage-sensitive sodium channels (Nav). Acts against insects and cause a progressive spastic paralysis. This is Mu-diguetoxin-Dc1b from Diguetia canities (Desert bush spider).